A 150-amino-acid polypeptide reads, in one-letter code: FAD synthase (150 aa).

Residues 20-21 (TF), 25-28 (HPGH), and Asp103 each bind ATP.

The protein belongs to the archaeal FAD synthase family. As to quaternary structure, homodimer. The cofactor is a divalent metal cation.

The enzyme catalyses FMN + ATP + H(+) = FAD + diphosphate. It participates in cofactor biosynthesis; FAD biosynthesis; FAD from FMN: step 1/1. Its function is as follows. Catalyzes the transfer of the AMP portion of ATP to flavin mononucleotide (FMN) to produce flavin adenine dinucleotide (FAD) coenzyme. The sequence is that of FAD synthase from Methanohalobium evestigatum (strain ATCC BAA-1072 / DSM 3721 / NBRC 107634 / OCM 161 / Z-7303).